A 268-amino-acid polypeptide reads, in one-letter code: Embryonic abundant protein VF30.1 (268 aa).

A signal peptide spans 1–25 (MEFAHLTVLSLFCLAFVGITATSSG). The BURP domain maps to 68-259 (LFFEHDLHPG…GNKAAAWVPN (192 aa)). Asn-259 is a glycosylation site (N-linked (GlcNAc...) asparagine).

In terms of tissue distribution, seed.

Its subcellular location is the secreted. In Vicia faba (Broad bean), this protein is Embryonic abundant protein VF30.1.